The sequence spans 239 residues: Ribonuclease PH (239 aa).

Phosphate is bound by residues Arg87 and Gly125–Arg127.

Belongs to the RNase PH family. In terms of assembly, homohexameric ring arranged as a trimer of dimers.

It catalyses the reaction tRNA(n+1) + phosphate = tRNA(n) + a ribonucleoside 5'-diphosphate. Functionally, phosphorolytic 3'-5' exoribonuclease that plays an important role in tRNA 3'-end maturation. Removes nucleotide residues following the 3'-CCA terminus of tRNAs; can also add nucleotides to the ends of RNA molecules by using nucleoside diphosphates as substrates, but this may not be physiologically important. Probably plays a role in initiation of 16S rRNA degradation (leading to ribosome degradation) during starvation. The chain is Ribonuclease PH from Dehalococcoides mccartyi (strain ATCC BAA-2266 / KCTC 15142 / 195) (Dehalococcoides ethenogenes (strain 195)).